Consider the following 222-residue polypeptide: uncharacterized protein (222 aa).

The segment at 142–222 (ARRGGCVHPP…LPDPPSAGHL (81 aa)) is disordered. Low complexity predominate over residues 160–169 (QSRSISSRRA). Basic residues predominate over residues 182–196 (PRRRPHRHRTRPQTR).

It belongs to the Rv1128c/1148c/1588c/1702c/1945/3466 family.

This is an uncharacterized protein from Mycobacterium tuberculosis (strain CDC 1551 / Oshkosh).